The following is a 409-amino-acid chain: Torsin-4A (409 aa).

A compositionally biased stretch (basic and acidic residues) spans 1–16; the sequence is MGEQDPSDRLRGDQLK. 2 disordered regions span residues 1–28 and 75–99; these read MGEQDPSDRLRGDQLKEPNQNGKGSFSQ and DNLHEPVNSNPASPRKRKKKRKGRV. Polar residues predominate over residues 17–28; it reads EPNQNGKGSFSQ. Residues 88–98 are compositionally biased toward basic residues; sequence PRKRKKKRKGR. A helical transmembrane segment spans residues 120–136; that stretch reads CLYLLCIIVFLQVYNAI. ATP is bound at residue 192–199; it reads GPTGVGKS.

It belongs to the ClpA/ClpB family. Torsin subfamily.

Its subcellular location is the membrane. In Danio rerio (Zebrafish), this protein is Torsin-4A (tor4a).